The following is a 426-amino-acid chain: COMPASS component SWD1 (426 aa).

WD repeat units follow at residues 24-63 (ENPLRTECLQFSPCGDYLALGCANGALVIYDMDTFRPICV), 70-109 (AHVRPITSIAWSPDGRLLLTSSRDWSIKLWDLSKPSKPLK), 212-251 (ITSSNIKHLIVSQNGERLAINCSDRTIRQYEISIDDENSA), 264-307 (INKL…LVRV), and 310-350 (GAEE…KWSA). Positions 236 and 266 each coordinate DNA.

As to quaternary structure, component of the Set1C/COMPASS complex which consists of SET1(2), BRE2(2), SPP1(2), SDC1(1), SHG1(1), SWD1(1), SWD2(1), and SWD3(1).

The protein resides in the nucleus. It localises to the chromosome. Its subcellular location is the telomere. In terms of biological role, component of the Set1C/COMPASS complex that specifically mono-, di- and trimethylates histone H3 to form H3K4me1/2/3, which subsequently plays a role in telomere length maintenance and transcription elongation regulation. COMPASS recognizes ubiquitinated H2B on one face of the nucleosome which stimulates the methylation of H3 on the opposing face. SWD1/CPS50 acts as an assembly and regulatory hub for COMPASS complex formation. Serves as a highly utilized surface for COMPASS interaction with the nucleosome. The sequence is that of COMPASS component SWD1 from Saccharomyces cerevisiae (strain ATCC 204508 / S288c) (Baker's yeast).